The primary structure comprises 312 residues: Holliday junction branch migration complex subunit RuvB (312 aa).

Positions 1–168 (MKTNYEFRPQ…FGHIFHLNEY (168 aa)) are large ATPase domain (RuvB-L). Residues Arg8, Gly49, Lys52, Thr53, Thr54, 115 to 117 (EDF), Arg158, Tyr168, and Arg206 contribute to the ATP site. A Mg(2+)-binding site is contributed by Thr53. Residues 169-234 (EPSEISAIIL…DIKNIFKKIQ (66 aa)) form a small ATPAse domain (RuvB-S) region. The tract at residues 237-312 (EFGLDEQDIN…DFLKNNQLIK (76 aa)) is head domain (RuvB-H). Positions 290 and 295 each coordinate DNA.

The protein belongs to the RuvB family. In terms of assembly, homohexamer. Forms an RuvA(8)-RuvB(12)-Holliday junction (HJ) complex. HJ DNA is sandwiched between 2 RuvA tetramers; dsDNA enters through RuvA and exits via RuvB. An RuvB hexamer assembles on each DNA strand where it exits the tetramer. Each RuvB hexamer is contacted by two RuvA subunits (via domain III) on 2 adjacent RuvB subunits; this complex drives branch migration. In the full resolvosome a probable DNA-RuvA(4)-RuvB(12)-RuvC(2) complex forms which resolves the HJ.

It is found in the cytoplasm. It carries out the reaction ATP + H2O = ADP + phosphate + H(+). Functionally, the RuvA-RuvB-RuvC complex processes Holliday junction (HJ) DNA during genetic recombination and DNA repair, while the RuvA-RuvB complex plays an important role in the rescue of blocked DNA replication forks via replication fork reversal (RFR). RuvA specifically binds to HJ cruciform DNA, conferring on it an open structure. The RuvB hexamer acts as an ATP-dependent pump, pulling dsDNA into and through the RuvAB complex. RuvB forms 2 homohexamers on either side of HJ DNA bound by 1 or 2 RuvA tetramers; 4 subunits per hexamer contact DNA at a time. Coordinated motions by a converter formed by DNA-disengaged RuvB subunits stimulates ATP hydrolysis and nucleotide exchange. Immobilization of the converter enables RuvB to convert the ATP-contained energy into a lever motion, pulling 2 nucleotides of DNA out of the RuvA tetramer per ATP hydrolyzed, thus driving DNA branch migration. The RuvB motors rotate together with the DNA substrate, which together with the progressing nucleotide cycle form the mechanistic basis for DNA recombination by continuous HJ branch migration. Branch migration allows RuvC to scan DNA until it finds its consensus sequence, where it cleaves and resolves cruciform DNA. In Ureaplasma parvum serovar 3 (strain ATCC 27815 / 27 / NCTC 11736), this protein is Holliday junction branch migration complex subunit RuvB.